A 444-amino-acid chain; its full sequence is COP9 signalosome complex subunit 2 (444 aa).

The disordered stretch occupies residues 1 to 31 (MSDNDDDFMCDDDEDYGLEYSEDSNSEPDVD). A PCI domain is found at 255–417 (AHTDFFEAFK…QVLQLDKINS (163 aa)).

It belongs to the CSN2 family. Component of the CSN complex, probably composed of CSN1b, alien/CSN2, CSN3, CSN4, CSN5, CSN6, CSN7 and CSN8. Interacts with Rpn6. In terms of tissue distribution, expressed during embryonic stages 11-14 in the muscle attachment sites (apodemes); pharynx attachment to the roof of the mouth and in the epidermis of the head for the dorsal and ventral prothoracic pharyngeal muscle attachment. From stage 16 onwards expression is seen in all thoracic and abdominal apodemes.

The protein localises to the cytoplasm. It localises to the nucleus. In terms of biological role, component of the COP9 signalosome complex (CSN), a complex involved in various cellular and developmental processes. The CSN complex is an essential regulator of the ubiquitin (Ubl) conjugation pathway by mediating the deneddylation of the cullin subunits of the SCF-type E3 ligase complexes, leading to decrease the Ubl ligase activity of SCF. The CSN complex plays an essential role in oogenesis and embryogenesis and is required for proper photoreceptor R cell differentiation and promote lamina glial cell migration or axon targeting. It also promotes Ubl-dependent degradation of cyclin E (CycE) during early oogenesis. The polypeptide is COP9 signalosome complex subunit 2 (Drosophila melanogaster (Fruit fly)).